The following is a 183-amino-acid chain: Peptide methionine sulfoxide reductase MsrA 1 (183 aa).

Residue Cys-12 is part of the active site.

The protein belongs to the MsrA Met sulfoxide reductase family.

The enzyme catalyses L-methionyl-[protein] + [thioredoxin]-disulfide + H2O = L-methionyl-(S)-S-oxide-[protein] + [thioredoxin]-dithiol. The catalysed reaction is [thioredoxin]-disulfide + L-methionine + H2O = L-methionine (S)-S-oxide + [thioredoxin]-dithiol. Has an important function as a repair enzyme for proteins that have been inactivated by oxidation. Catalyzes the reversible oxidation-reduction of methionine sulfoxide in proteins to methionine. The sequence is that of Peptide methionine sulfoxide reductase MsrA 1 (msrA1) from Lactococcus lactis subsp. lactis (strain IL1403) (Streptococcus lactis).